A 146-amino-acid polypeptide reads, in one-letter code: Ecotin-like protein 1 (146 aa).

Belongs to the protease inhibitor I11 (ecotin) family.

The chain is Ecotin-like protein 1 (ISP1) from Leishmania infantum.